We begin with the raw amino-acid sequence, 297 residues long: MAGYATTPSPMQTLQEEAVCAICLDYFKDPVSISCGHNFCRGCVTQLWSKEDEEDQNEEEDEWEEEEDEEAVGAMDGWDGSIREVLYRGNADEELFQDQDDDELWLGDSGITNWDNVDYMWDEEEEEEEEDQDYYLGGLRPDLRIDVYREEEILEAYDEDEDEELYPDIHPPPSLPLPGQFTCPQCRKSFTRRSFRPNLQLANMVQIIRQMCPTPYRGNRSNDQGMCFKHQEALKLFCEVDKEAICVVCRESRSHKQHSVLPLEEVVQEYQEIKLETTLVGILQIEQESIHSKAYNQ.

The RING-type; degenerate zinc finger occupies 20 to 62 (CAICLDYFKDPVSISCGHNFCRGCVTQLWSKEDEEDQNEEEDE). Residues 72–167 (VGAMDGWDGS…DEDEDEELYP (96 aa)) form an important for rapid proteolytic degradation by the proteasome region. Residues 222 to 263 (NDQGMCFKHQEALKLFCEVDKEAICVVCRESRSHKQHSVLPL) form a B box-type zinc finger. The Zn(2+) site is built by cysteine 227, histidine 230, cysteine 249, and histidine 255.

The protein belongs to the TRIM/RBCC family. As to quaternary structure, (Microbial infection) Interacts with Japanese encephalitis virus non-structural protein 2 (NS2A); mediates the ubiquitination of NS2A, targeting it for proteasome-mediated degradation. In terms of processing, autoubiquitinated. Polyubiquitinated. Undergoes extremely rapid proteolytic degradation by the proteasome.

The protein localises to the cytoplasm. The protein resides in the cytosol. It localises to the nucleus. The catalysed reaction is S-ubiquitinyl-[E2 ubiquitin-conjugating enzyme]-L-cysteine + [acceptor protein]-L-lysine = [E2 ubiquitin-conjugating enzyme]-L-cysteine + N(6)-ubiquitinyl-[acceptor protein]-L-lysine.. It functions in the pathway protein modification; protein ubiquitination. In terms of biological role, E3 ubiquitin-protein ligase. Positively regulates the NF-kappa-B signaling pathway. Functionally, (Microbial infection) Exhibits antiviral activity against Japanese encephalitis virus (JEV). Ubiquitinates the viral non-structural protein 2 (NS2A) and targets it for proteasome-mediated degradation. In Homo sapiens (Human), this protein is E3 ubiquitin-protein ligase TRIM52 (TRIM52).